A 486-amino-acid chain; its full sequence is Glutamyl-tRNA(Gln) amidotransferase subunit A (486 aa).

Active-site charge relay system residues include lysine 79 and serine 154. Residue serine 178 is the Acyl-ester intermediate of the active site.

It belongs to the amidase family. GatA subfamily. In terms of assembly, heterotrimer of A, B and C subunits.

It carries out the reaction L-glutamyl-tRNA(Gln) + L-glutamine + ATP + H2O = L-glutaminyl-tRNA(Gln) + L-glutamate + ADP + phosphate + H(+). Functionally, allows the formation of correctly charged Gln-tRNA(Gln) through the transamidation of misacylated Glu-tRNA(Gln) in organisms which lack glutaminyl-tRNA synthetase. The reaction takes place in the presence of glutamine and ATP through an activated gamma-phospho-Glu-tRNA(Gln). The chain is Glutamyl-tRNA(Gln) amidotransferase subunit A from Myxococcus xanthus (strain DK1622).